Here is a 229-residue protein sequence, read N- to C-terminus: Lipoprotein-releasing system ATP-binding protein LolD (229 aa).

The 221-residue stretch at 9 to 229 (LRLEQVARRY…TIREGQIVPA (221 aa)) folds into the ABC transporter domain. Residue 45 to 52 (APSGTGKS) coordinates ATP.

The protein belongs to the ABC transporter superfamily. Lipoprotein translocase (TC 3.A.1.125) family. In terms of assembly, the complex is composed of two ATP-binding proteins (LolD) and two transmembrane proteins (LolC and LolE).

Its subcellular location is the cell inner membrane. Its function is as follows. Part of the ABC transporter complex LolCDE involved in the translocation of mature outer membrane-directed lipoproteins, from the inner membrane to the periplasmic chaperone, LolA. Responsible for the formation of the LolA-lipoprotein complex in an ATP-dependent manner. The sequence is that of Lipoprotein-releasing system ATP-binding protein LolD from Granulibacter bethesdensis (strain ATCC BAA-1260 / CGDNIH1).